Consider the following 96-residue polypeptide: Protein Vpr (96 aa).

Residues 1–42 (MEQAPEDQGPQREPYNEWTLELLEELKSEAVRHFPRIWLHSL) are homooligomerization. A phosphoserine; by host mark is found at S79, S94, and S96.

It belongs to the HIV-1 VPR protein family. Homooligomer, may form homodimer. Interacts with p6-gag region of the Pr55 Gag precursor protein through a (Leu-X-X)4 motif near the C-terminus of the P6gag protein. Interacts with host UNG. May interact with host RAD23A/HHR23A. Interacts with host VPRBP/DCAF1, leading to hijack the CUL4A-RBX1-DDB1-DCAF1/VPRBP complex, mediating ubiquitination of host proteins such as TERT and ZGPAT and arrest of the cell cycle in G2 phase. Phosphorylated on several residues by host. These phosphorylations regulate VPR activity for the nuclear import of the HIV-1 pre-integration complex.

It localises to the virion. The protein localises to the host nucleus. It is found in the host extracellular space. In terms of biological role, during virus replication, may deplete host UNG protein, and incude G2-M cell cycle arrest. Acts by targeting specific host proteins for degradation by the 26S proteasome, through association with the cellular CUL4A-DDB1 E3 ligase complex by direct interaction with host VPRPB/DCAF-1. Cell cycle arrest reportedly occurs within hours of infection and is not blocked by antiviral agents, suggesting that it is initiated by the VPR carried into the virion. Additionally, VPR induces apoptosis in a cell cycle dependent manner suggesting that these two effects are mechanistically linked. Detected in the serum and cerebrospinal fluid of AIDS patient, VPR may also induce cell death to bystander cells. During virus entry, plays a role in the transport of the viral pre-integration (PIC) complex to the host nucleus. This function is crucial for viral infection of non-dividing macrophages. May act directly at the nuclear pore complex, by binding nucleoporins phenylalanine-glycine (FG)-repeat regions. The chain is Protein Vpr from Homo sapiens (Human).